The following is a 317-amino-acid chain: tRNA N6-adenosine threonylcarbamoyltransferase (317 aa).

2 residues coordinate Fe cation: H110 and H114. Substrate contacts are provided by residues 132–136 (VVSGG), D165, G178, D182, and N271. D300 provides a ligand contact to Fe cation.

The protein belongs to the KAE1 / TsaD family. The cofactor is Fe(2+).

It localises to the cytoplasm. The enzyme catalyses L-threonylcarbamoyladenylate + adenosine(37) in tRNA = N(6)-L-threonylcarbamoyladenosine(37) in tRNA + AMP + H(+). In terms of biological role, required for the formation of a threonylcarbamoyl group on adenosine at position 37 (t(6)A37) in tRNAs that read codons beginning with adenine. Is involved in the transfer of the threonylcarbamoyl moiety of threonylcarbamoyl-AMP (TC-AMP) to the N6 group of A37, together with TsaE and TsaB. TsaD likely plays a direct catalytic role in this reaction. This Mesoplasma florum (strain ATCC 33453 / NBRC 100688 / NCTC 11704 / L1) (Acholeplasma florum) protein is tRNA N6-adenosine threonylcarbamoyltransferase.